The sequence spans 204 residues: Protein XpaC (204 aa).

In terms of biological role, in double copy it causes aberrant cell morphology, filamentation and inhibits sporulation. Hydrolyzes 5-bromo-4-chloroindolyl phosphate. This is Protein XpaC (xpaC) from Bacillus subtilis (strain 168).